Consider the following 857-residue polypeptide: Phosphoenolpyruvate carboxylase (857 aa).

Catalysis depends on residues His144 and Lys530.

Belongs to the PEPCase type 1 family. In terms of assembly, homotetramer. It depends on Mg(2+) as a cofactor. Post-translationally, the N-terminus is blocked.

It catalyses the reaction oxaloacetate + phosphate = phosphoenolpyruvate + hydrogencarbonate. Forms oxaloacetate, a four-carbon dicarboxylic acid source for the tricarboxylic acid cycle. In Thermus sp. (strain 71), this protein is Phosphoenolpyruvate carboxylase (ppc).